The sequence spans 447 residues: Guanine nucleotide-binding protein alpha-1 subunit (447 aa).

Gly2 carries N-myristoyl glycine lipidation. Residue Cys3 is the site of S-palmitoyl cysteine attachment. Residues 40 to 447 (NEVKLLLLGA…QQNLKKSGIL (408 aa)) form the G-alpha domain. The interval 43-56 (KLLLLGAGESGKST) is G1 motif. GTP-binding residues include Glu51, Ser52, Gly53, Lys54, Ser55, Thr56, Leu269, Thr275, Gly297, Asn363, Lys364, Asp366, and Ala419. Residue Ser55 participates in Mg(2+) binding. Residues 267–275 (DILKGRIKT) are G2 motif. Thr275 lines the Mg(2+) pocket. Residues 290-299 (FKVYDAGGQR) form a G3 motif region. The interval 359-366 (ILFLNKVD) is G4 motif. The tract at residues 417–422 (TCATDT) is G5 motif.

It belongs to the G-alpha family. In terms of assembly, g proteins are composed of 3 units; alpha, beta and gamma. The alpha chain contains the guanine nucleotide binding site. It depends on Mg(2+) as a cofactor.

In terms of biological role, guanine nucleotide-binding proteins (G proteins) are involved as modulators or transducers in various transmembrane signaling systems. This protein is involved in the mating response pathway. The sequence is that of Guanine nucleotide-binding protein alpha-1 subunit (GPA1) from Kluyveromyces lactis (strain ATCC 8585 / CBS 2359 / DSM 70799 / NBRC 1267 / NRRL Y-1140 / WM37) (Yeast).